The chain runs to 1019 residues: Clotting factor C (1019 aa).

An N-terminal signal peptide occupies residues 1–25 (MVLASFLVSGLVLGILAQQMRPVQS). The 36-residue stretch at 102–137 (YGTWCSGECQCKNGGICDQRTGACTCRDRYEGAHCE) folds into the EGF-like domain. Cystine bridges form between cysteine 110–cysteine 118, cysteine 112–cysteine 125, cysteine 127–cysteine 136, cysteine 142–cysteine 182, cysteine 168–cysteine 195, cysteine 199–cysteine 241, cysteine 227–cysteine 254, cysteine 260–cysteine 308, cysteine 294–cysteine 321, cysteine 331–cysteine 350, cysteine 354–cysteine 374, cysteine 464–cysteine 564, cysteine 538–cysteine 556, cysteine 576–cysteine 621, cysteine 607–cysteine 634, and cysteine 720–cysteine 748. 3 consecutive Sushi domains span residues 140–197 (KGCP…KCIR), 198–256 (ECAK…QCKK), and 258–323 (VFCP…SCVK). The 97-residue stretch at 325 to 421 (ADREVDCDSK…EELKSLARSF (97 aa)) folds into the LCCL domain. A C-type lectin domain is found at 436–568 (CPDGWFEVEE…PSSFACMMDL (133 aa)). N-linked (GlcNAc...) asparagine glycans are attached at residues asparagine 523 and asparagine 534. Sushi domains lie at 574–636 (AKCD…RCIK) and 689–750 (PRSS…SCIP). N-linked (GlcNAc...) asparagine glycans are attached at residues asparagine 624, asparagine 740, and asparagine 767. The region spanning 763-1019 (IWNGNSTEIG…VFLSWIRQFI (257 aa)) is the Peptidase S1 domain. A disulfide bridge links cysteine 794 with cysteine 810. Active-site charge relay system residues include histidine 809 and aspartate 865. Asparagine 912 carries an N-linked (GlcNAc...) asparagine glycan. Cysteine 932 and cysteine 951 are joined by a disulfide. Aspartate 960 contributes to the substrate binding site. Cysteine 962 and cysteine 996 are oxidised to a cystine. The active-site Charge relay system is serine 966.

The protein belongs to the peptidase S1 family. As to quaternary structure, heterodimer of a light chain and a heavy chain linked by a disulfide bond. Forms a covalent heterodimer with intracellular coagulation inhibitor 1/LICI-1. Forms a covalent heterodimer with intracellular coagulation inhibitor 2/LICI-2. In terms of processing, N-glycosylated. Post-translationally, lipopolysaccharide (LPS) activates clotting factor C by inducing the proteolytic cleavage of the clotting factor C light chain into clotting factor C chains A and B. Clotting factor C chains heavy, A and B remain associated via interchain disulfide bonds. As to expression, expressed in hemocytes (at protein level).

Its subcellular location is the secreted. It catalyses the reaction Selective cleavage of 103-Arg-|-Ser-104 and 124-Ile-|-Ile-125 bonds in Limulus clotting factor B to form activated factor B. Cleavage of -Pro-Arg-|-Xaa- bonds in synthetic substrates.. Activated by Gram-negative bacterial lipopolysaccharides. Inhibited by intracellular coagulation inhibitor 1/LICI-1 and to a lesser extent by intracellular coagulation inhibitors 2/LICI-2 and 3/LICI-3. Inhibited by the small molecule diisopropyl fluorophosphate (DFP). Its function is as follows. This enzyme is closely associated with an endotoxin-sensitive hemolymph coagulation system which may play important roles in both hemostasis and host defense mechanisms. Its active form catalyzes the activation of clotting factor B. The chain is Clotting factor C from Tachypleus tridentatus (Japanese horseshoe crab).